The chain runs to 105 residues: Heat shock protein HspQ (105 aa).

Residues Gly75 to Asn105 form a disordered region.

Belongs to the HspQ family.

It is found in the cytoplasm. Functionally, involved in the degradation of certain denaturated proteins, including DnaA, during heat shock stress. The sequence is that of Heat shock protein HspQ from Serratia proteamaculans (strain 568).